A 934-amino-acid polypeptide reads, in one-letter code: Bifunctional uridylyltransferase/uridylyl-removing enzyme (934 aa).

The tract at residues 1-379 (MSAHDLKLEE…TFSRRKRKLS (379 aa)) is uridylyltransferase. Residues 380–736 (DDGAFISENH…AKPHAFEAVT (357 aa)) are uridylyl-removing. An HD domain is found at 496–613 (VDEHLLRCIA…IDFADTVQTM (118 aa)). 2 consecutive ACT domains span residues 737–818 (EITV…DMLA) and 848–931 (VIEV…RSPQ).

It belongs to the GlnD family. Mg(2+) is required as a cofactor.

The catalysed reaction is [protein-PII]-L-tyrosine + UTP = [protein-PII]-uridylyl-L-tyrosine + diphosphate. It catalyses the reaction [protein-PII]-uridylyl-L-tyrosine + H2O = [protein-PII]-L-tyrosine + UMP + H(+). With respect to regulation, uridylyltransferase (UTase) activity is inhibited by glutamine, while glutamine activates uridylyl-removing (UR) activity. Its function is as follows. Modifies, by uridylylation and deuridylylation, the PII regulatory proteins (GlnB and homologs), in response to the nitrogen status of the cell that GlnD senses through the glutamine level. Under low glutamine levels, catalyzes the conversion of the PII proteins and UTP to PII-UMP and PPi, while under higher glutamine levels, GlnD hydrolyzes PII-UMP to PII and UMP (deuridylylation). Thus, controls uridylylation state and activity of the PII proteins, and plays an important role in the regulation of nitrogen assimilation and metabolism. The protein is Bifunctional uridylyltransferase/uridylyl-removing enzyme of Brucella suis biovar 1 (strain 1330).